A 101-amino-acid chain; its full sequence is Co-chaperonin GroES 1 (101 aa).

This sequence belongs to the GroES chaperonin family. As to quaternary structure, heptamer of 7 subunits arranged in a ring. Interacts with the chaperonin GroEL.

The protein resides in the cytoplasm. Its function is as follows. Together with the chaperonin GroEL, plays an essential role in assisting protein folding. The GroEL-GroES system forms a nano-cage that allows encapsulation of the non-native substrate proteins and provides a physical environment optimized to promote and accelerate protein folding. GroES binds to the apical surface of the GroEL ring, thereby capping the opening of the GroEL channel. This chain is Co-chaperonin GroES 1, found in Rhodopirellula baltica (strain DSM 10527 / NCIMB 13988 / SH1).